The following is a 391-amino-acid chain: Elongation factor Tu 1 (391 aa).

One can recognise a tr-type G domain in the interval 10 to 201; sequence KLHVNIGTIG…EVDRYIPTPE (192 aa). The segment at 19 to 26 is G1; sequence GHVDHGKT. 19 to 26 contributes to the GTP binding site; it reads GHVDHGKT. Position 26 (T26) interacts with Mg(2+). The tract at residues 55–59 is G2; that stretch reads GITIS. Residues 76-79 are G3; sequence DCPG. GTP is bound by residues 76 to 80 and 131 to 134; these read DCPGH and NKVD. The interval 131–134 is G4; sequence NKVD. The interval 169 to 171 is G5; sequence SAL.

Belongs to the TRAFAC class translation factor GTPase superfamily. Classic translation factor GTPase family. EF-Tu/EF-1A subfamily. In terms of assembly, monomer.

The protein localises to the cytoplasm. It catalyses the reaction GTP + H2O = GDP + phosphate + H(+). Its function is as follows. GTP hydrolase that promotes the GTP-dependent binding of aminoacyl-tRNA to the A-site of ribosomes during protein biosynthesis. This Bartonella bacilliformis (strain ATCC 35685 / KC583 / Herrer 020/F12,63) protein is Elongation factor Tu 1.